Here is a 712-residue protein sequence, read N- to C-terminus: MSQEKQVFSIDLAGRQLTVETGQLAKQANGAVLVRYGDTAVLSTATASKEAKNVDFFPLTVNYEERLYAVGKIPGGFIKREGRPSEKAILASRLIDRPIRPLFADGFRNEVQVVSIVMSVDQDCSSEMAAMLGSSLALSISDIPFEGPIAGATVGRINGEFVINPTVEQQEQSDIHLVVAGTKDAINMVEAGADQVPEETMLEAIMFGHDEIKRLIAFQEEIVQAVGKEKSEVKLYEVDADLNQSVREMAEKDMHSAIQVHEKHAREDAINEVKKRVIEHYEAQEADADTLGQVNEILYKIVKEEVRRLITVEKIRPDGRKGDEIRPLASEVGILSRTHGSGLFTRGQTQALSICTLGALGDVQILDGLGVEESKRFMHHYNFPSFSVGETRPMRGPGRREIGHGALGERALEPVIPSEKDFPYTVRLVSEVLESNGSTSQASICGSTLAMMDAGVPLKAPVAGIAMGLVKSGEHYTILTDIQGMEDHLGDMDFKVAGTAHGVTALQMDIKIDGLSREILEEALQQAKVGRMHILDHMLSVIAEPRTELSAYAPKIITMTINPDKIRDVIGPSGKQINKIIEETGVKIDIEQDGTVFISSINQEMNDKAKKIIEDIVREVQVGEIYEGKVKRVEKFGAFVELFSGKDGLVHISELALERVGKVEDVVKIGDVITVKVIEIDKQGRVNLSRKVLLKEEQEKEAAKEENKQEQQ.

D487 and D493 together coordinate Mg(2+). One can recognise a KH domain in the interval 554–613; that stretch reads PKIITMTINPDKIRDVIGPSGKQINKIIEETGVKIDIEQDGTVFISSINQEMNDKAKKII. The region spanning 623 to 691 is the S1 motif domain; the sequence is GEIYEGKVKR…KQGRVNLSRK (69 aa).

The protein belongs to the polyribonucleotide nucleotidyltransferase family. The cofactor is Mg(2+).

It is found in the cytoplasm. The catalysed reaction is RNA(n+1) + phosphate = RNA(n) + a ribonucleoside 5'-diphosphate. Its function is as follows. Involved in mRNA degradation. Catalyzes the phosphorolysis of single-stranded polyribonucleotides processively in the 3'- to 5'-direction. This chain is Polyribonucleotide nucleotidyltransferase, found in Bacillus cereus (strain ATCC 10987 / NRS 248).